A 658-amino-acid chain; its full sequence is Threonine--tRNA ligase (658 aa).

In terms of domain architecture, TGS spans 1-61 (MSDVRVIIQR…RDGESVEPVE (61 aa)). The interval 259–554 (DHRKLGNELD…LLEHYAGAFP (296 aa)) is catalytic. C353, H404, and H531 together coordinate Zn(2+).

It belongs to the class-II aminoacyl-tRNA synthetase family. As to quaternary structure, homodimer. Zn(2+) serves as cofactor.

It is found in the cytoplasm. It carries out the reaction tRNA(Thr) + L-threonine + ATP = L-threonyl-tRNA(Thr) + AMP + diphosphate + H(+). Its function is as follows. Catalyzes the attachment of threonine to tRNA(Thr) in a two-step reaction: L-threonine is first activated by ATP to form Thr-AMP and then transferred to the acceptor end of tRNA(Thr). Also edits incorrectly charged L-seryl-tRNA(Thr). This is Threonine--tRNA ligase from Streptomyces griseus subsp. griseus (strain JCM 4626 / CBS 651.72 / NBRC 13350 / KCC S-0626 / ISP 5235).